A 1029-amino-acid polypeptide reads, in one-letter code: 2-oxoglutarate dehydrogenase, mitochondrial (1029 aa).

Residues Arg317, Asp415, Asn448, Ile450, and Gln676 each contribute to the thiamine diphosphate site. 3 residues coordinate Mg(2+): Asp415, Asn448, and Ile450.

This sequence belongs to the alpha-ketoglutarate dehydrogenase family. In terms of assembly, homodimer. Component of the 2-oxoglutarate dehydrogenase complex. Thiamine diphosphate is required as a cofactor. The cofactor is Mg(2+).

It localises to the mitochondrion matrix. It carries out the reaction N(6)-[(R)-lipoyl]-L-lysyl-[protein] + 2-oxoglutarate + H(+) = N(6)-[(R)-S(8)-succinyldihydrolipoyl]-L-lysyl-[protein] + CO2. Functionally, the 2-oxoglutarate dehydrogenase complex catalyzes the overall conversion of 2-oxoglutarate to succinyl-CoA and CO(2). It contains multiple copies of three enzymatic components: 2-oxoglutarate dehydrogenase (E1), dihydrolipoamide succinyltransferase (E2) and lipoamide dehydrogenase (E3). This is 2-oxoglutarate dehydrogenase, mitochondrial (ogdh-1) from Caenorhabditis elegans.